The following is a 350-amino-acid chain: Erythronate-4-phosphate dehydrogenase (350 aa).

Substrate is bound by residues Ser45 and Thr66. Residues 124-125 (QV), Asp144, 203-205 (ASR), and Asp226 each bind NAD(+). Arg205 is a catalytic residue. Glu231 is an active-site residue. The active-site Proton donor is the His248. Residue Gly251 participates in NAD(+) binding.

The protein belongs to the D-isomer specific 2-hydroxyacid dehydrogenase family. PdxB subfamily. Homodimer.

Its subcellular location is the cytoplasm. The enzyme catalyses 4-phospho-D-erythronate + NAD(+) = (R)-3-hydroxy-2-oxo-4-phosphooxybutanoate + NADH + H(+). It functions in the pathway cofactor biosynthesis; pyridoxine 5'-phosphate biosynthesis; pyridoxine 5'-phosphate from D-erythrose 4-phosphate: step 2/5. In terms of biological role, catalyzes the oxidation of erythronate-4-phosphate to 3-hydroxy-2-oxo-4-phosphonooxybutanoate. This Legionella pneumophila subsp. pneumophila (strain Philadelphia 1 / ATCC 33152 / DSM 7513) protein is Erythronate-4-phosphate dehydrogenase.